The sequence spans 211 residues: MNESDAKHWLSDRVSRETMDRLELYHTLLTRWQKTINLIAPSTIDSVWVRHIMDSAQLFDLASKPAHRWLDLGSGGGFPGLVVAAMAKDVCPNLTVTLVESDIRKCGFLREAARQMDLSVKILSRRIGDVPAQTADVISARALSSLSNLIGHARPHMTPKTCLLFPKGMSYVAELETLPDDWQVNAEVIESVTDSDAVILRFRGAHLEGEG.

3 residues coordinate S-adenosyl-L-methionine: Gly-73, Phe-78, and Arg-141.

The protein belongs to the methyltransferase superfamily. RNA methyltransferase RsmG family.

It localises to the cytoplasm. It catalyses the reaction guanosine(527) in 16S rRNA + S-adenosyl-L-methionine = N(7)-methylguanosine(527) in 16S rRNA + S-adenosyl-L-homocysteine. In terms of biological role, specifically methylates the N7 position of guanine in position 527 of 16S rRNA. The polypeptide is Ribosomal RNA small subunit methyltransferase G (Jannaschia sp. (strain CCS1)).